The following is a 202-amino-acid chain: Dephospho-CoA kinase (202 aa).

The 197-residue stretch at 6-202 folds into the DPCK domain; that stretch reads KVSITGDLSS…EYFYALKGAL (197 aa). 14-19 serves as a coordination point for ATP; that stretch reads SSGKTE.

The protein belongs to the CoaE family.

It is found in the cytoplasm. It catalyses the reaction 3'-dephospho-CoA + ATP = ADP + CoA + H(+). It participates in cofactor biosynthesis; coenzyme A biosynthesis; CoA from (R)-pantothenate: step 5/5. Functionally, catalyzes the phosphorylation of the 3'-hydroxyl group of dephosphocoenzyme A to form coenzyme A. This is Dephospho-CoA kinase from Chlamydia pneumoniae (Chlamydophila pneumoniae).